A 125-amino-acid chain; its full sequence is UPF0538 protein C2C4.04c (125 aa).

The protein belongs to the UPF0538 family.

This chain is UPF0538 protein C2C4.04c, found in Schizosaccharomyces pombe (strain 972 / ATCC 24843) (Fission yeast).